A 128-amino-acid polypeptide reads, in one-letter code: Large ribosomal subunit protein bL12 (128 aa).

It belongs to the bacterial ribosomal protein bL12 family. Homodimer. Part of the ribosomal stalk of the 50S ribosomal subunit. Forms a multimeric L10(L12)X complex, where L10 forms an elongated spine to which 2 to 4 L12 dimers bind in a sequential fashion. Binds GTP-bound translation factors.

Its function is as follows. Forms part of the ribosomal stalk which helps the ribosome interact with GTP-bound translation factors. Is thus essential for accurate translation. In Trichormus variabilis (strain ATCC 29413 / PCC 7937) (Anabaena variabilis), this protein is Large ribosomal subunit protein bL12.